The sequence spans 420 residues: Carbohydrate sulfotransferase 12 (420 aa).

The Cytoplasmic portion of the chain corresponds to 1–5 (MAKSR). Residues 6–26 (LFCLLVALGSVFMILFIIVYW) traverse the membrane as a helical; Signal-anchor for type II membrane protein segment. Residues 27–420 (DNVGTANLNL…YPKPDDLLSV (394 aa)) are Lumenal-facing. Asn76 and Asn139 each carry an N-linked (GlcNAc...) asparagine glycan. 176-182 (PKVACTN) is a binding site for 3'-phosphoadenylyl sulfate. The N-linked (GlcNAc...) asparagine glycan is linked to Asn215. 251–259 (RDPFVRLIS) serves as a coordination point for 3'-phosphoadenylyl sulfate. N-linked (GlcNAc...) asparagine glycosylation is found at Asn286 and Asn376.

The protein belongs to the sulfotransferase 2 family.

It localises to the golgi apparatus membrane. It catalyses the reaction chondroitin beta-D-glucuronate + n 3'-phosphoadenylyl sulfate = chondroitin 4'-sulfate + n adenosine 3',5'-bisphosphate + n H(+). Its function is as follows. Catalyzes the transfer of sulfate to position 4 of the N-acetylgalactosamine (GalNAc) residue of chondroitin and desulfated dermatan sulfate. Chondroitin sulfate constitutes the predominant proteoglycan present in cartilage and is distributed on the surfaces of many cells and extracellular matrices. This is Carbohydrate sulfotransferase 12 (chst12) from Xenopus laevis (African clawed frog).